The primary structure comprises 652 residues: tRNA-guanine(15) transglycosylase (652 aa).

Aspartate 88 (nucleophile) is an active-site residue. Residues aspartate 123 and alanine 194 each coordinate substrate. The Zn(2+) site is built by cysteine 280, cysteine 282, and cysteine 285. The PUA domain occupies 577 to 652 (KYRVVIDSEV…AAVSVRSGFK (76 aa)).

It belongs to the archaeosine tRNA-ribosyltransferase family. Zn(2+) is required as a cofactor.

It carries out the reaction guanosine(15) in tRNA + 7-cyano-7-deazaguanine = 7-cyano-7-carbaguanosine(15) in tRNA + guanine. The protein operates within tRNA modification; archaeosine-tRNA biosynthesis. Functionally, exchanges the guanine residue with 7-cyano-7-deazaguanine (preQ0) at position 15 in the dihydrouridine loop (D-loop) of archaeal tRNAs. The chain is tRNA-guanine(15) transglycosylase from Methanococcus aeolicus (strain ATCC BAA-1280 / DSM 17508 / OCM 812 / Nankai-3).